The primary structure comprises 235 residues: Eukaryotic translation initiation factor 4E-1 (235 aa).

Residues 1–16 (MAVEDTPKSVVTEEAK) are compositionally biased toward basic and acidic residues. The interval 1 to 59 (MAVEDTPKSVVTEEAKPNSIENPIDRYHEEGDDAEEGEIAGGEGDGNVDESSKSGVPES) is disordered. EIF4G-binding regions lie at residues 60 to 63 (HPLE) and 70 to 106 (FDNPAVKSKQTSWGSSLRPVFTFSTVEEFWSLYNNMK). MRNA is bound by residues 78–83 (KQTSWG), K110, and 128–129 (WE). C133 and C171 are disulfide-bonded. Positions 154-163 (YTLLALIGEQ) are EIF4G-binding. Residues 178–183 (RGKQER) and 223–227 (KKLDR) contribute to the mRNA site.

This sequence belongs to the eukaryotic initiation factor 4E family. As to quaternary structure, EIF4F is a multi-subunit complex, the composition of which varies with external and internal environmental conditions. It is composed of at least EIF4A, EIF4E and EIF4G. EIF4E is also known to interact with other partners. In higher plants two isoforms of EIF4F have been identified, named isoform EIF4F and isoform EIF(iso)4F. Isoform EIF4F has subunits p220 and p26, whereas isoform EIF(iso)4F has subunits p82 and p28. Interacts directly with EXA1. (Microbial infection) Interacts with viral genome-linked protein (VPg); this interaction is possible in susceptible hosts but impaired in resistant plants. In terms of processing, according to the redox status, the Cys-133-Cys-171 disulfide bridge may have a role in regulating protein function by affecting its ability to bind capped mRNA. In terms of tissue distribution, expressed in all tissues except in the cells of the specialization zone of the roots.

The protein localises to the nucleus. It is found in the cytoplasm. Functionally, component of the protein complex eIF4F, which is involved in the recognition of the mRNA cap, ATP-dependent unwinding of 5'-terminal secondary structure and recruitment of mRNA to the ribosome. Recognizes and binds the 7-methylguanosine-containing mRNA cap during an early step in the initiation of protein synthesis and facilitates ribosome binding by inducing the unwinding of the mRNAs secondary structures. Key component of recessive resistance to potyviruses. In terms of biological role, (Microbial infection) Susceptibility host factor required for viral infection by recruiting viral RNAs to the host ribosomal complex via an interaction with viral genome-linked protein (VPg). The protein is Eukaryotic translation initiation factor 4E-1 of Arabidopsis thaliana (Mouse-ear cress).